Consider the following 314-residue polypeptide: Methionyl-tRNA formyltransferase (314 aa).

109–112 (SLLP) contacts (6S)-5,6,7,8-tetrahydrofolate.

Belongs to the Fmt family.

It catalyses the reaction L-methionyl-tRNA(fMet) + (6R)-10-formyltetrahydrofolate = N-formyl-L-methionyl-tRNA(fMet) + (6S)-5,6,7,8-tetrahydrofolate + H(+). Its function is as follows. Attaches a formyl group to the free amino group of methionyl-tRNA(fMet). The formyl group appears to play a dual role in the initiator identity of N-formylmethionyl-tRNA by promoting its recognition by IF2 and preventing the misappropriation of this tRNA by the elongation apparatus. In Alkaliphilus metalliredigens (strain QYMF), this protein is Methionyl-tRNA formyltransferase.